Reading from the N-terminus, the 86-residue chain is Small ribosomal subunit protein bS18c (86 aa).

This sequence belongs to the bacterial ribosomal protein bS18 family. As to quaternary structure, part of the 30S ribosomal subunit.

The protein resides in the plastid. The protein localises to the chloroplast. This Pseudotsuga menziesii (Douglas-fir) protein is Small ribosomal subunit protein bS18c.